We begin with the raw amino-acid sequence, 421 residues long: Leucine-rich repeat-containing protein 42 (421 aa).

LRR repeat units follow at residues 149–170 (VLCS…EEIK), 174–195 (ELTR…LEHL), 202–222 (SVTQ…RKMT), 234–255 (NLTL…GYLF), and 259–280 (KLNC…KDKL). Residues 374-406 (HEPLLSQESKKSKKRAFEESEQEQSSPQSAKQK) are disordered. Position 399 is a phosphoserine (Ser-399).

The protein belongs to the LRRC42 family.

This chain is Leucine-rich repeat-containing protein 42 (Lrrc42), found in Rattus norvegicus (Rat).